Consider the following 476-residue polypeptide: 23S rRNA (uracil(1939)-C(5))-methyltransferase RlmD (476 aa).

The region spanning 1-55 (MVDEVLKIESLDLEARGIARRDGKVVFVEGALPGERVYAATVRRKPSYEIARVET) is the TRAM domain. Positions 68, 74, 77, and 156 each coordinate [4Fe-4S] cluster. Residues glutamine 265, phenylalanine 294, asparagine 299, glutamate 315, asparagine 343, and aspartate 364 each coordinate S-adenosyl-L-methionine. Residue cysteine 394 is the Nucleophile of the active site.

Belongs to the class I-like SAM-binding methyltransferase superfamily. RNA M5U methyltransferase family. RlmD subfamily.

The catalysed reaction is uridine(1939) in 23S rRNA + S-adenosyl-L-methionine = 5-methyluridine(1939) in 23S rRNA + S-adenosyl-L-homocysteine + H(+). Its function is as follows. Catalyzes the formation of 5-methyl-uridine at position 1939 (m5U1939) in 23S rRNA. This chain is 23S rRNA (uracil(1939)-C(5))-methyltransferase RlmD, found in Bordetella avium (strain 197N).